Here is a 227-residue protein sequence, read N- to C-terminus: Cytochrome c oxidase subunit 2 (227 aa).

Residues 1–14 lie on the Mitochondrial intermembrane side of the membrane; the sequence is MANHSQLGFQDASS. A helical transmembrane segment spans residues 15–45; it reads PIMEELVEFHDHALMVALAICSLVLYLLTLM. Over 46–58 the chain is Mitochondrial matrix; the sequence is LMEKLSSNTVDAQ. The chain crosses the membrane as a helical span at residues 59–86; sequence EVELIWTILPAIVLVLLALPSLQILYMM. The Mitochondrial intermembrane segment spans residues 87 to 227; sequence DEIDEPDLTL…FEAWSSLLSS (141 aa). Cu cation is bound by residues His-160, Cys-195, Glu-197, Cys-199, His-203, and Met-206. Position 197 (Glu-197) interacts with Mg(2+).

It belongs to the cytochrome c oxidase subunit 2 family. Component of the cytochrome c oxidase (complex IV, CIV), a multisubunit enzyme composed of 14 subunits. The complex is composed of a catalytic core of 3 subunits MT-CO1, MT-CO2 and MT-CO3, encoded in the mitochondrial DNA, and 11 supernumerary subunits COX4I, COX5A, COX5B, COX6A, COX6B, COX6C, COX7A, COX7B, COX7C, COX8 and NDUFA4, which are encoded in the nuclear genome. The complex exists as a monomer or a dimer and forms supercomplexes (SCs) in the inner mitochondrial membrane with NADH-ubiquinone oxidoreductase (complex I, CI) and ubiquinol-cytochrome c oxidoreductase (cytochrome b-c1 complex, complex III, CIII), resulting in different assemblies (supercomplex SCI(1)III(2)IV(1) and megacomplex MCI(2)III(2)IV(2)). Found in a complex with TMEM177, COA6, COX18, COX20, SCO1 and SCO2. Interacts with TMEM177 in a COX20-dependent manner. Interacts with COX20. Interacts with COX16. Requires Cu cation as cofactor.

It localises to the mitochondrion inner membrane. It catalyses the reaction 4 Fe(II)-[cytochrome c] + O2 + 8 H(+)(in) = 4 Fe(III)-[cytochrome c] + 2 H2O + 4 H(+)(out). Component of the cytochrome c oxidase, the last enzyme in the mitochondrial electron transport chain which drives oxidative phosphorylation. The respiratory chain contains 3 multisubunit complexes succinate dehydrogenase (complex II, CII), ubiquinol-cytochrome c oxidoreductase (cytochrome b-c1 complex, complex III, CIII) and cytochrome c oxidase (complex IV, CIV), that cooperate to transfer electrons derived from NADH and succinate to molecular oxygen, creating an electrochemical gradient over the inner membrane that drives transmembrane transport and the ATP synthase. Cytochrome c oxidase is the component of the respiratory chain that catalyzes the reduction of oxygen to water. Electrons originating from reduced cytochrome c in the intermembrane space (IMS) are transferred via the dinuclear copper A center (CU(A)) of subunit 2 and heme A of subunit 1 to the active site in subunit 1, a binuclear center (BNC) formed by heme A3 and copper B (CU(B)). The BNC reduces molecular oxygen to 2 water molecules using 4 electrons from cytochrome c in the IMS and 4 protons from the mitochondrial matrix. The protein is Cytochrome c oxidase subunit 2 (MT-CO2) of Gallus gallus (Chicken).